The chain runs to 157 residues: MGIISYLFDLAQDMALAAIPAVGFAMVFNVPQRALRWCALLGAIGHGSRMVMMSAGFNIEWATFLAALLVGSIGIQWSRWYLAHPKIFTVAAVIPMFPGISAYTAMISAVKISHFGYSEEMMIMLLSNFLKASSIVGALSIGLSIPGLWLYRKRPRV.

Transmembrane regions (helical) follow at residues 10 to 30 (LAQDMALAAIPAVGFAMVFNV), 55 to 75 (AGFNIEWATFLAALLVGSIGI), 87 to 107 (IFTVAAVIPMFPGISAYTAMI), and 129 to 149 (FLKASSIVGALSIGLSIPGLW).

It belongs to the ThrE exporter (TC 2.A.79) family. In terms of assembly, the transporter is composed of YjjB and YjjP.

It localises to the cell inner membrane. Involved in succinate export with YjjP. Both proteins are required for export. Participates in succinate export, but also in the export of other dicarboxylates, such as fumarate and malate. Contributes to succinate production under both aerobic and anaerobic conditions, and increases fumarate and malate production during anaerobic succinate production. This Klebsiella aerogenes (strain ATCC 13048 / DSM 30053 / CCUG 1429 / JCM 1235 / KCTC 2190 / NBRC 13534 / NCIMB 10102 / NCTC 10006 / CDC 819-56) (Enterobacter aerogenes) protein is Probable succinate transporter subunit YjjB.